We begin with the raw amino-acid sequence, 149 residues long: D-aminoacyl-tRNA deacylase (149 aa).

The Gly-cisPro motif, important for rejection of L-amino acids signature appears at 137–138 (GP).

The protein belongs to the DTD family. In terms of assembly, homodimer.

It is found in the cytoplasm. It carries out the reaction glycyl-tRNA(Ala) + H2O = tRNA(Ala) + glycine + H(+). The enzyme catalyses a D-aminoacyl-tRNA + H2O = a tRNA + a D-alpha-amino acid + H(+). An aminoacyl-tRNA editing enzyme that deacylates mischarged D-aminoacyl-tRNAs. Also deacylates mischarged glycyl-tRNA(Ala), protecting cells against glycine mischarging by AlaRS. Acts via tRNA-based rather than protein-based catalysis; rejects L-amino acids rather than detecting D-amino acids in the active site. By recycling D-aminoacyl-tRNA to D-amino acids and free tRNA molecules, this enzyme counteracts the toxicity associated with the formation of D-aminoacyl-tRNA entities in vivo and helps enforce protein L-homochirality. The polypeptide is D-aminoacyl-tRNA deacylase (Thioalkalivibrio sulfidiphilus (strain HL-EbGR7)).